The sequence spans 661 residues: Vasorin (661 aa).

Positions 1–19 (MWHLLVWIILLATAQQMIT) are cleaved as a signal peptide. The LRRNT domain occupies 20 to 50 (EGCPAGCQCNTPQTVFCLARKNSNFPRSVPP). Topologically, residues 20 to 563 (EGCPAGCQCN…VTQSQEGNLT (544 aa)) are extracellular. LRR repeat units lie at residues 52–72 (TLNLYVFENGISSIEESSFIG), 75–96 (GLHLLDLSHNQLSSLPGGVFRN), 99–120 (NLSNLDLTSNQLTEISADTFQG), 123–144 (RLERLYLNGNRIRSIHPEAFKG), 147–168 (SLLELKLSNNQLVTPPAFSLPH), 169–189 (LLLLDLSYNAIPVIQQGVFNA), 191–212 (NIESLRLAGLGLKEVPEELLSG), 215–237 (NLHELDLSDNQLDKVPPGLHGLT), 238–258 (KLNIAGNVGFSQIQVDDLSNL), and 259–281 (PALQELDLSGLSLQTLPKGLFRS). N-linked (GlcNAc...) asparagine glycosylation occurs at Asn-99. The 54-residue stretch at 293–346 (NPFNCVCSLGWLSEWMRVSGVVLLRPDETRCHFPPKNAGKTLRQLRDSEYGCPA) folds into the LRRCT domain. The span at 348–385 (TTIQMPSTMPPSTTTGPPTTTKHLQTEAPTTASTTTTT) shows a compositional bias: low complexity. The interval 348-395 (TTIQMPSTMPPSTTTGPPTTTKHLQTEAPTTASTTTTTIPHQEQEEDT) is disordered. The 38-residue stretch at 403–440 (EDTLCPPQTCLNGGSCHLDPTGQLECECPPGFQGTYCE) folds into the EGF-like domain. 3 disulfides stabilise this stretch: Cys-407–Cys-418, Cys-412–Cys-428, and Cys-430–Cys-439. Residues 455-543 (EQVKIIEVTV…EEDLCTETHT (89 aa)) form the Fibronectin type-III domain. N-linked (GlcNAc...) asparagine glycosylation is found at Asn-518 and Asn-561. Residues 564–584 (LVLVPAVAAGILLSAAVAAAA) form a helical membrane-spanning segment. The Cytoplasmic portion of the chain corresponds to 585–661 (CYARRRKGKG…PTGRLPHSYF (77 aa)). A disordered region spans residues 591–661 (KGKGHSVEDG…PTGRLPHSYF (71 aa)). Positions 606-623 (DGVKKGLDGKGEVKKLSE) are enriched in basic and acidic residues.

It is found in the membrane. Its function is as follows. May act as an inhibitor of TGF-beta signaling. The polypeptide is Vasorin (vasn) (Xenopus tropicalis (Western clawed frog)).